The primary structure comprises 488 residues: Eukaryotic translation initiation factor 3 subunit L (488 aa).

Disordered stretches follow at residues 1-34 (MSLP…YREQ) and 427-449 (SEGG…HGKE). Basic and acidic residues predominate over residues 7-16 (QNRDAARRAP). Over residues 17–27 (DDDDDAEEETM) the composition is skewed to acidic residues. Residues 256 to 450 (DAIRMFSHIL…RSRLRHGKEI (195 aa)) form the PCI domain. The segment covering 431-440 (LLERRGDPQQ) has biased composition (basic and acidic residues).

It belongs to the eIF-3 subunit L family. As to quaternary structure, component of the eukaryotic translation initiation factor 3 (eIF-3) complex.

Its subcellular location is the cytoplasm. Component of the eukaryotic translation initiation factor 3 (eIF-3) complex, which is involved in protein synthesis of a specialized repertoire of mRNAs and, together with other initiation factors, stimulates binding of mRNA and methionyl-tRNAi to the 40S ribosome. The eIF-3 complex specifically targets and initiates translation of a subset of mRNAs involved in cell proliferation. In Phaeosphaeria nodorum (strain SN15 / ATCC MYA-4574 / FGSC 10173) (Glume blotch fungus), this protein is Eukaryotic translation initiation factor 3 subunit L.